A 326-amino-acid polypeptide reads, in one-letter code: Putative HTH-type transcriptional regulatory protein MMP0678 (326 aa).

The 56-residue stretch at 128–183 (LRETREKLKISVGELAEVSRVSRKTIYKYEQNEANPSAEVAIKIEEYLDVPLIKGI) folds into the HTH cro/C1-type domain. The H-T-H motif DNA-binding region spans 139–158 (VGELAEVSRVSRKTIYKYEQ).

In Methanococcus maripaludis (strain DSM 14266 / JCM 13030 / NBRC 101832 / S2 / LL), this protein is Putative HTH-type transcriptional regulatory protein MMP0678.